An 81-amino-acid polypeptide reads, in one-letter code: MAVQLFKTLLNQIPLLSSLQSGTLPLFGYSGWGRPMKKAHTGESGLKWEAKDSSKLIGNKDHALRGLSSPMAVIRQIRLIT.

This is an uncharacterized protein from Escherichia coli (strain K12).